A 150-amino-acid polypeptide reads, in one-letter code: Cytochrome c oxidase subunit 5A, mitochondrial (150 aa).

A mitochondrion-targeting transit peptide spans 1–41 (MLGAALRRCAVAATARAGPRGLLHSAPTPGPAAAIQSVRCY). The SIFI-degron signature appears at 2–17 (LGAALRRCAVAATARA). 2 positions are modified to N6-acetyllysine: lysine 87 and lysine 113. Threonine 141 bears the Phosphothreonine mark.

This sequence belongs to the cytochrome c oxidase subunit 5A family. As to quaternary structure, component of the cytochrome c oxidase (complex IV, CIV), a multisubunit enzyme composed of 14 subunits. The complex is composed of a catalytic core of 3 subunits MT-CO1, MT-CO2 and MT-CO3, encoded in the mitochondrial DNA, and 11 supernumerary subunits COX4I, COX5A, COX5B, COX6A, COX6B, COX6C, COX7A, COX7B, COX7C, COX8 and NDUFA4, which are encoded in the nuclear genome. The complex exists as a monomer or a dimer and forms supercomplexes (SCs) in the inner mitochondrial membrane with NADH-ubiquinone oxidoreductase (complex I, CI) and ubiquinol-cytochrome c oxidoreductase (cytochrome b-c1 complex, complex III, CIII), resulting in different assemblies (supercomplex SCI(1)III(2)IV(1) and megacomplex MCI(2)III(2)IV(2)). Interacts with AFG1L. Interacts with RAB5IF. In terms of processing, in response to mitochondrial stress, the precursor protein is ubiquitinated by the SIFI complex in the cytoplasm before mitochondrial import, leading to its degradation. Within the SIFI complex, UBR4 initiates ubiquitin chain that are further elongated or branched by KCMF1.

It localises to the mitochondrion inner membrane. The protein operates within energy metabolism; oxidative phosphorylation. Its function is as follows. Component of the cytochrome c oxidase, the last enzyme in the mitochondrial electron transport chain which drives oxidative phosphorylation. The respiratory chain contains 3 multisubunit complexes succinate dehydrogenase (complex II, CII), ubiquinol-cytochrome c oxidoreductase (cytochrome b-c1 complex, complex III, CIII) and cytochrome c oxidase (complex IV, CIV), that cooperate to transfer electrons derived from NADH and succinate to molecular oxygen, creating an electrochemical gradient over the inner membrane that drives transmembrane transport and the ATP synthase. Cytochrome c oxidase is the component of the respiratory chain that catalyzes the reduction of oxygen to water. Electrons originating from reduced cytochrome c in the intermembrane space (IMS) are transferred via the dinuclear copper A center (CU(A)) of subunit 2 and heme A of subunit 1 to the active site in subunit 1, a binuclear center (BNC) formed by heme A3 and copper B (CU(B)). The BNC reduces molecular oxygen to 2 water molecules using 4 electrons from cytochrome c in the IMS and 4 protons from the mitochondrial matrix. This Cebuella pygmaea (Pygmy marmoset) protein is Cytochrome c oxidase subunit 5A, mitochondrial (COX5A).